Consider the following 240-residue polypeptide: UPF0173 metal-dependent hydrolase OE_2513F (240 aa).

It belongs to the UPF0173 family.

The polypeptide is UPF0173 metal-dependent hydrolase OE_2513F (Halobacterium salinarum (strain ATCC 29341 / DSM 671 / R1)).